A 52-amino-acid chain; its full sequence is uncharacterized protein (52 aa).

Residues 1–52 (MFGFIYRDPSPAPQGKIRDGSKDPKTPGGGGGGGGGISPNGGAPLGGKGFSM) form a disordered region. Over residues 16–25 (KIRDGSKDPK) the composition is skewed to basic and acidic residues. The span at 27 to 52 (PGGGGGGGGGISPNGGAPLGGKGFSM) shows a compositional bias: gly residues.

This is an uncharacterized protein from Dictyostelium discoideum (Social amoeba).